We begin with the raw amino-acid sequence, 125 residues long: Histone H1-like protein Hc1 (125 aa).

Residues 98–125 are disordered; the sequence is TKAKVKPTKKAAPKTKVKTAKKTRSTKK. Positions 100 to 125 are enriched in basic residues; sequence AKVKPTKKAAPKTKVKTAKKTRSTKK.

This sequence belongs to the histone H1/H5 family. HCT subfamily.

In terms of biological role, might have a role analogous to that of eukaryotic histone proteins. The protein is Histone H1-like protein Hc1 (hctA) of Chlamydia trachomatis serovar L2 (strain ATCC VR-902B / DSM 19102 / 434/Bu).